The sequence spans 842 residues: Glucans biosynthesis glucosyltransferase H (842 aa).

Transmembrane regions (helical) follow at residues 140-160 (ILLLLTLSQTVVATWYMKTIL), 194-214 (ILILFAVLFCWVSAGFWTALM), 513-533 (VFLTGVMSYLSAPLWFMFLAL), 568-588 (IALFASTMVLLFLPKLLSIIL), 600-620 (FIRVTLSLLLEVLFSVLLAPV), 622-642 (MLFHTVFVVSAFLGWEVVWNS), 656-676 (FMRHGSQLLLGLVWAVGMAWL), and 680-700 (FLFWLAPIVVSLILSPFVSAI).

This sequence belongs to the glycosyltransferase 2 family. OpgH subfamily.

It localises to the cell inner membrane. It functions in the pathway glycan metabolism; osmoregulated periplasmic glucan (OPG) biosynthesis. In terms of biological role, involved in the biosynthesis of osmoregulated periplasmic glucans (OPGs). The chain is Glucans biosynthesis glucosyltransferase H from Klebsiella pneumoniae (strain 342).